The primary structure comprises 169 residues: Large ribosomal subunit protein uL10 (169 aa).

Belongs to the universal ribosomal protein uL10 family. Part of the ribosomal stalk of the 50S ribosomal subunit. The N-terminus interacts with L11 and the large rRNA to form the base of the stalk. The C-terminus forms an elongated spine to which L12 dimers bind in a sequential fashion forming a multimeric L10(L12)X complex.

In terms of biological role, forms part of the ribosomal stalk, playing a central role in the interaction of the ribosome with GTP-bound translation factors. This chain is Large ribosomal subunit protein uL10, found in Onion yellows phytoplasma (strain OY-M).